A 342-amino-acid polypeptide reads, in one-letter code: Renalase (342 aa).

The signal sequence occupies residues 1 to 17; the sequence is MAQVLIVGAGMTGSLCA. FAD is bound by residues Thr12, Arg42, and 61–62; that span reads QY.

The protein belongs to the renalase family. The cofactor is FAD. Secreted into the blood by the kidney. Highly expressed in the kidney, expressed at lower level in heart, skeletal muscle and small intestine. Its plasma concentration is markedly reduced in patients with end-stage renal disease, as compared with healthy subjects.

Its subcellular location is the secreted. The enzyme catalyses 1,2-dihydro-beta-NAD + O2 + H(+) = H2O2 + NAD(+). It carries out the reaction 1,2-dihydro-beta-NADP + O2 + H(+) = H2O2 + NADP(+). The catalysed reaction is 1,6-dihydro-beta-NADP + O2 + H(+) = H2O2 + NADP(+). It catalyses the reaction 1,6-dihydro-beta-NAD + O2 + H(+) = H2O2 + NAD(+). Catalyzes the oxidation of the less abundant 1,2-dihydro-beta-NAD(P) and 1,6-dihydro-beta-NAD(P) to form beta-NAD(P)(+). The enzyme hormone is secreted by the kidney, and circulates in blood and modulates cardiac function and systemic blood pressure. Lowers blood pressure in vivo by decreasing cardiac contractility and heart rate and preventing a compensatory increase in peripheral vascular tone, suggesting a causal link to the increased plasma catecholamine and heightened cardiovascular risk. High concentrations of catecholamines activate plasma renalase and promotes its secretion and synthesis. The protein is Renalase (RNLS) of Homo sapiens (Human).